A 208-amino-acid chain; its full sequence is Large ribosomal subunit protein uL3 (208 aa).

The interval 116-148 is disordered; the sequence is GFQGVIKRHGQSRGPMAHGSRYHRRPGSMGPVA.

Belongs to the universal ribosomal protein uL3 family. As to quaternary structure, part of the 50S ribosomal subunit. Forms a cluster with proteins L14 and L19.

In terms of biological role, one of the primary rRNA binding proteins, it binds directly near the 3'-end of the 23S rRNA, where it nucleates assembly of the 50S subunit. This is Large ribosomal subunit protein uL3 from Streptococcus pyogenes serotype M12 (strain MGAS2096).